A 121-amino-acid polypeptide reads, in one-letter code: UPF0295 protein OB0906 (121 aa).

Helical transmembrane passes span 14–34 (IRTF…GGIL) and 43–63 (VIFF…YVWI).

This sequence belongs to the UPF0295 family.

It localises to the cell membrane. The sequence is that of UPF0295 protein OB0906 from Oceanobacillus iheyensis (strain DSM 14371 / CIP 107618 / JCM 11309 / KCTC 3954 / HTE831).